The chain runs to 346 residues: Flap endonuclease 1 (346 aa).

An N-domain region spans residues 1–102 (MGVTELGKLI…AEIEERRKAK (102 aa)). Mg(2+) is bound by residues Asp-31, Asp-84, Glu-156, Glu-158, Asp-177, Asp-179, and Asp-239. Residues 120-261 (EVAKYAKRAI…RALKLIWEFG (142 aa)) are I-domain.

Belongs to the XPG/RAD2 endonuclease family. FEN1 subfamily. Interacts with PCNA. PCNA stimulates the nuclease activity without altering cleavage specificity. It depends on Mg(2+) as a cofactor.

Functionally, structure-specific nuclease with 5'-flap endonuclease and 5'-3' exonuclease activities involved in DNA replication and repair. During DNA replication, cleaves the 5'-overhanging flap structure that is generated by displacement synthesis when DNA polymerase encounters the 5'-end of a downstream Okazaki fragment. Binds the unpaired 3'-DNA end and kinks the DNA to facilitate 5' cleavage specificity. Cleaves one nucleotide into the double-stranded DNA from the junction in flap DNA, leaving a nick for ligation. Also involved in the base excision repair (BER) pathway. Acts as a genome stabilization factor that prevents flaps from equilibrating into structures that lead to duplications and deletions. Also possesses 5'-3' exonuclease activity on nicked or gapped double-stranded DNA. This is Flap endonuclease 1 from Pyrobaculum arsenaticum (strain DSM 13514 / JCM 11321 / PZ6).